A 341-amino-acid chain; its full sequence is Peptidoglycan recognition protein 3 (341 aa).

Residues 1–17 (MGTLPWLLAFFILGLQA) form the signal peptide. 2 consecutive N-acetylmuramoyl-L-alanine amidase domains span residues 77 to 179 (TIGW…KVCP) and 200 to 325 (PAKY…ILSP). N-linked (GlcNAc...) asparagine glycosylation occurs at asparagine 113. Disulfide bonds link cysteine 178–cysteine 300, cysteine 194–cysteine 238, and cysteine 214–cysteine 220. Residues histidine 231, arginine 235, and tyrosine 242 each contribute to the peptidoglycan site. Residues 264-269 (HTYGFN) are interaction with murein.

This sequence belongs to the N-acetylmuramoyl-L-alanine amidase 2 family. Monomer. Homodimer; disulfide-linked. Heterodimer with PGLYRP4; disulfide-linked. Post-translationally, N-glycosylated. In terms of tissue distribution, detected in skin epidermis, eccrine sweat glands and ducts, ciliary body epithelial cells of the eye, in small intestine, colon, stomach and in mature epithelial cells of the tongue (at protein level). Highly expressed in skin and esophagus, expressed also in tonsils and thymus and to a much lesser extent in the stomach, descending colon, rectum and brain.

It is found in the secreted. Functionally, pattern receptor that binds to murein peptidoglycans (PGN) of Gram-positive bacteria. Has bactericidal activity towards Gram-positive bacteria. May kill Gram-positive bacteria by interfering with peptidoglycan biosynthesis. Also binds to Gram-negative bacteria, and has bacteriostatic activity towards Gram-negative bacteria. Plays a role in innate immunity. The sequence is that of Peptidoglycan recognition protein 3 (PGLYRP3) from Homo sapiens (Human).